We begin with the raw amino-acid sequence, 407 residues long: Endo-1,4-beta-xylanase D (407 aa).

A signal peptide spans 1 to 19 (MTLVKSILLALAAGHVAQA). Residues 20–333 (QLNTAAKAAG…KPAYYGILAG (314 aa)) form the GH10 domain. An N-linked (GlcNAc...) asparagine glycan is attached at N118. The Proton donor role is filled by E148. E255 serves as the catalytic Nucleophile. C283 and C289 are oxidised to a cystine. Residues 337–364 (GSGSSSSTSSTTLITTTTPTASSSTTSA) form a disordered region. A CBM1 domain is found at 371 to 407 (SGAAHWGQCGGIGWSGPTICVSPYTCQVLNPYYSQCL).

This sequence belongs to the glycosyl hydrolase 10 (cellulase F) family.

The protein localises to the secreted. It carries out the reaction Endohydrolysis of (1-&gt;4)-beta-D-xylosidic linkages in xylans.. It participates in glycan degradation; xylan degradation. Its activity is regulated as follows. Inhibited by wheat xylanase inhibiting protein I (XIP-I). Functionally, endo-1,4-beta-xylanase involved in the hydrolysis of xylan, a major structural heterogeneous polysaccharide found in plant biomass representing the second most abundant polysaccharide in the biosphere, after cellulose. Shows an endo-mode of action on xylan forming mainly xylobiose and short-chain xylooligosaccharides (XOS). This is Endo-1,4-beta-xylanase D (xynD) from Talaromyces funiculosus (Fruitlet core rot fungus).